We begin with the raw amino-acid sequence, 314 residues long: MTALILKRVAQAIPVMLIVAILTFLLMKLLPGDPAILIAGDGASPETVERIRVELGLDQPTVVQLGQWLWNLFHFDLGRSFLLSQPVSQAIAERLPVTISLALLAFAITIPVGIIMGVVAAYLRDSWFDTGVMSLALLGVSVPSFWLAILAVILFSVTLGWFPSAGYVPFLDSPLGWLRSLILPASILALFQIGYLARMTRSEMLEVMDQDYIRTARSKGVSEYSVLSTHAFRNALVSVLTVSGYIFSLLIGGSVVIEQIFALPGLGRLLVQAILARDLPVVQGTMLFLGFLFVAINVLVDILYTIADPRVRYD.

A run of 6 helical transmembrane segments spans residues 12-32 (AIPVMLIVAILTFLLMKLLPG), 101-121 (LALLAFAITIPVGIIMGVVAA), 135-155 (LALLGVSVPSFWLAILAVILF), 177-197 (WLRSLILPASILALFQIGYLA), 237-257 (VSVLTVSGYIFSLLIGGSVVI), and 286-306 (MLFLGFLFVAINVLVDILYTI). The ABC transmembrane type-1 domain occupies 95 to 304 (LPVTISLALL…AINVLVDILY (210 aa)).

This sequence belongs to the binding-protein-dependent transport system permease family. As to quaternary structure, the complex is composed of two ATP-binding proteins (BruAb2_1033 and BruAb2_1034), two transmembrane proteins (BruAb2_1031 and BruAb2_1032) and a solute-binding protein (BruAb2_1030).

The protein localises to the cell inner membrane. In terms of biological role, probably part of an ABC transporter complex that could be involved in peptide import. Probably responsible for the translocation of the substrate across the membrane. This Brucella abortus biovar 1 (strain 9-941) protein is Putative peptide transport system permease protein BruAb2_1031.